Reading from the N-terminus, the 479-residue chain is Aspartyl/glutamyl-tRNA(Asn/Gln) amidotransferase subunit B (479 aa).

The protein belongs to the GatB/GatE family. GatB subfamily. In terms of assembly, heterotrimer of A, B and C subunits.

The enzyme catalyses L-glutamyl-tRNA(Gln) + L-glutamine + ATP + H2O = L-glutaminyl-tRNA(Gln) + L-glutamate + ADP + phosphate + H(+). The catalysed reaction is L-aspartyl-tRNA(Asn) + L-glutamine + ATP + H2O = L-asparaginyl-tRNA(Asn) + L-glutamate + ADP + phosphate + 2 H(+). Its function is as follows. Allows the formation of correctly charged Asn-tRNA(Asn) or Gln-tRNA(Gln) through the transamidation of misacylated Asp-tRNA(Asn) or Glu-tRNA(Gln) in organisms which lack either or both of asparaginyl-tRNA or glutaminyl-tRNA synthetases. The reaction takes place in the presence of glutamine and ATP through an activated phospho-Asp-tRNA(Asn) or phospho-Glu-tRNA(Gln). This is Aspartyl/glutamyl-tRNA(Asn/Gln) amidotransferase subunit B from Mycoplasma mycoides subsp. mycoides SC (strain CCUG 32753 / NCTC 10114 / PG1).